A 108-amino-acid polypeptide reads, in one-letter code: UPF0060 membrane protein amb3269 (108 aa).

Helical transmembrane passes span 4-24 (IPTYILAAFAEIGGCFAFWAW), 31-51 (PLWLVPGMASLGLFAWALTRI), 59-79 (AYAAYGGIYILASLIWMWAVE), and 85-105 (RWDTIGAAICVVGAMVIIFGP).

It belongs to the UPF0060 family.

The protein resides in the cell inner membrane. The sequence is that of UPF0060 membrane protein amb3269 from Paramagnetospirillum magneticum (strain ATCC 700264 / AMB-1) (Magnetospirillum magneticum).